We begin with the raw amino-acid sequence, 366 residues long: Terpene synthase 4 (366 aa).

The DDxx(x)D/E motif motif lies at 91-96 (DDFLER). Positions 241–249 (NDCVSYAKE) match the NDxxSxxxD/E motif motif.

The protein belongs to the terpene synthase family.

It carries out the reaction (2E,6E)-farnesyl diphosphate = (1S,2S,4R)-beta-elemene + diphosphate. Functionally, terpene synthase that converts its substrate farnesyl diphosphate (FPP) into the sesquiterpenes bicycloelemene, beta-elemene and 2 yet unidentified sesquiterpenes. The chain is Terpene synthase 4 from Dictyostelium purpureum (Slime mold).